The following is a 450-amino-acid chain: UDP-N-acetylmuramoylalanine--D-glutamate ligase (450 aa).

119–125 (GSNGKTT) is an ATP binding site.

The protein belongs to the MurCDEF family.

It localises to the cytoplasm. The catalysed reaction is UDP-N-acetyl-alpha-D-muramoyl-L-alanine + D-glutamate + ATP = UDP-N-acetyl-alpha-D-muramoyl-L-alanyl-D-glutamate + ADP + phosphate + H(+). It participates in cell wall biogenesis; peptidoglycan biosynthesis. Functionally, cell wall formation. Catalyzes the addition of glutamate to the nucleotide precursor UDP-N-acetylmuramoyl-L-alanine (UMA). The protein is UDP-N-acetylmuramoylalanine--D-glutamate ligase of Streptococcus thermophilus (strain ATCC BAA-491 / LMD-9).